A 97-amino-acid polypeptide reads, in one-letter code: HssA/B-like protein 47 (97 aa).

Positions 1–33 are disordered; sequence MTLFSSISSISNPMTSSKSSIASFGSGTSMSSN.

Belongs to the hssA/B family.

In Dictyostelium discoideum (Social amoeba), this protein is HssA/B-like protein 47 (hssl47).